The chain runs to 113 residues: Cytochrome c55X (113 aa).

The first 26 residues, 1-26 (MTVARHAVSRLGLALASFLLFPLALA), serve as a signal peptide directing secretion. Residues C45, C48, and H49 each coordinate heme c.

In terms of processing, binds 1 heme c group covalently per subunit.

It is found in the periplasm. In terms of biological role, monoheme c-type cytochrome. The sequence is that of Cytochrome c55X (nirC) from Stutzerimonas stutzeri (Pseudomonas stutzeri).